Consider the following 606-residue polypeptide: WD repeat-containing protein 1 (606 aa).

WD repeat units follow at residues 4-45 (EIKK…LRNI), 48-87 (PAIA…IWDT), 93-135 (LLKY…LWDT), 138-176 (SVGE…FFEG), 180-218 (KFKF…IYDG), 224-263 (VCAL…IWDV), 270-306 (STFP…YLDK), 311-351 (KPLR…YWDS), 358-408 (SFSG…KLDV), 432-474 (LKDQ…VYSI), 480-518 (KDEG…VFSV), 523-561 (SENN…VWTL), and 566-604 (TKVK…EWTI). 4 positions are modified to N6-acetyllysine: Lys28, Lys81, Lys95, and Lys115. At Tyr238 the chain carries Phosphotyrosine. Lys480 carries the post-translational modification N6-acetyllysine.

Belongs to the WD repeat AIP1 family.

It is found in the cytoplasm. The protein localises to the cytoskeleton. Its subcellular location is the cell projection. It localises to the podosome. Induces disassembly of actin filaments in conjunction with ADF/cofilin family proteins. Enhances cofilin-mediated actin severing. Involved in cytokinesis. Involved in chemotactic cell migration by restricting lamellipodial membrane protrusions. Involved in myocardium sarcomere organization. Required for cardiomyocyte growth at the postnatal and maintenance at the adult stage. Involved in neutrophil actin dynamics and migration. Involved in megakaryocyte maturation and platelet shedding. Required for the establishment of planar cell polarity (PCP) during follicular epithelium development and for cell shape changes during PCP; the function seems to implicate cooperation with CFL1 and/or DSTN/ADF. Involved in the generation/maintenance of cortical tension. Involved in assembly and maintenance of epithelial apical cell junctions and plays a role in the organization of the perijunctional actomyosin belt. The protein is WD repeat-containing protein 1 (Wdr1) of Mus musculus (Mouse).